Here is a 321-residue protein sequence, read N- to C-terminus: Homoserine O-succinyltransferase (321 aa).

The Acyl-thioester intermediate role is filled by cysteine 142. Lysine 163 and serine 192 together coordinate substrate. Catalysis depends on histidine 235, which acts as the Proton acceptor. Glutamate 237 is an active-site residue. A substrate-binding site is contributed by arginine 249.

This sequence belongs to the MetA family.

Its subcellular location is the cytoplasm. The catalysed reaction is L-homoserine + succinyl-CoA = O-succinyl-L-homoserine + CoA. The protein operates within amino-acid biosynthesis; L-methionine biosynthesis via de novo pathway; O-succinyl-L-homoserine from L-homoserine: step 1/1. Transfers a succinyl group from succinyl-CoA to L-homoserine, forming succinyl-L-homoserine. The protein is Homoserine O-succinyltransferase of Shewanella loihica (strain ATCC BAA-1088 / PV-4).